A 288-amino-acid polypeptide reads, in one-letter code: Pirin-like protein CC_3178 (288 aa).

Belongs to the pirin family.

This Caulobacter vibrioides (strain ATCC 19089 / CIP 103742 / CB 15) (Caulobacter crescentus) protein is Pirin-like protein CC_3178.